The sequence spans 470 residues: MGDGSSSRSNSSNSTSEKPEWLQQYNLVGKIGEGTYGLVFLARTKTPPKRPIAIKKFKQSKDGDGVSPTAIREIMLLREISHENVVKLVNVHINFADMSLYLAFDYAEYDLYEIIRHHRDKVGHSLNTYTVKSLLWQLLNGLNYLHSNWIIHRDLKPSNILVMGDAEEHGIVKIADFGLARIYQAPLKPLSDNGVVVTIWYRAPELLLGSKHYTSAVDMWAVGCIFAELLTLKPLFQGAEAKSSQNPFQLDQLDKIFKILGHPTMDKWPTLVNLPHWQNDVQHIQAHKYDSVGLHNVVHLNQKSPAYDLLSKMLEYDPLKRITASQALEHEYFRMDPLPGRNAFVASQPMEKNVNYPTRPVDTNTDFEGTTSINPPQAVAAGNVAGNMAGAHGMGSRSMPRPMVAHNMQRMQQSQGMMAYNFPAQAGLNPSVPLQQQRGMAQPHQQQQLRRKDPGMGMSGYAPPNKSRRL.

A Protein kinase domain is found at Tyr25 to Phe333. ATP-binding positions include Ile31 to Val39 and Lys55. At Tyr36 the chain carries Phosphotyrosine. The Proton acceptor role is filled by Asp154. Residues Leu428–Leu470 are disordered. Residues Val432–Gln448 are compositionally biased toward polar residues.

The protein belongs to the protein kinase superfamily. CMGC Ser/Thr protein kinase family. CDC2/CDKX subfamily. Interacts with MED14, HDA19 and LUG. Interacts with KIN10. As to expression, expressed in roots, leaves and stems. Expressed in young dividing tissue, such as shoot and root tips, lateral root primordia, young leaves and flowers. Expressed in the inflorescence meristem, inflorescence stem and young flowers.

The protein localises to the nucleus. It catalyses the reaction L-seryl-[protein] + ATP = O-phospho-L-seryl-[protein] + ADP + H(+). It carries out the reaction L-threonyl-[protein] + ATP = O-phospho-L-threonyl-[protein] + ADP + H(+). The enzyme catalyses [DNA-directed RNA polymerase] + ATP = phospho-[DNA-directed RNA polymerase] + ADP + H(+). Involved in cell differentiation. Required for the specification of stamen and carpel identities and for the proper termination of stem cells in the floral meristem. This is Cyclin-dependent kinase E-1 (CDKE-1) from Arabidopsis thaliana (Mouse-ear cress).